A 103-amino-acid polypeptide reads, in one-letter code: Small ribosomal subunit protein uS10 (103 aa).

Belongs to the universal ribosomal protein uS10 family. Part of the 30S ribosomal subunit.

Its function is as follows. Involved in the binding of tRNA to the ribosomes. This is Small ribosomal subunit protein uS10 from Paraburkholderia xenovorans (strain LB400).